The primary structure comprises 554 residues: Asparagine--tRNA ligase, cytoplasmic (554 aa).

Belongs to the class-II aminoacyl-tRNA synthetase family.

Its subcellular location is the cytoplasm. It is found in the cytosol. The enzyme catalyses tRNA(Asn) + L-asparagine + ATP = L-asparaginyl-tRNA(Asn) + AMP + diphosphate + H(+). Its function is as follows. Catalyzes the attachment of asparagine to tRNA(Asn) in a two-step reaction: asparagine is first activated by ATP to form Asn-AMP and then transferred to the acceptor end of tRNA(Asn). The chain is Asparagine--tRNA ligase, cytoplasmic from Saccharomyces cerevisiae (strain ATCC 204508 / S288c) (Baker's yeast).